The following is a 646-amino-acid chain: Pentatricopeptide repeat-containing protein At5g48910 (646 aa).

The segment at 1–24 is disordered; sequence MNPTQTLFSPGGNSPASSPASHPS. A compositionally biased stretch (low complexity) spans 9 to 24; sequence SPGGNSPASSPASHPS. 11 PPR repeats span residues 54 to 88, 89 to 126, 127 to 161, 162 to 197, 207 to 237, 238 to 272, 273 to 307, 308 to 338, 339 to 373, 374 to 409, and 410 to 440; these read DTLAAAEILRFCATSDLHHRDLDYAHKIFNQMPQR, NCFSWNTIIRGFSESDEDKALIAITLFYEMMSDEFVEP, NRFTFPSVLKACAKTGKIQEGKQIHGLALKYGFGG, DEFVMSNLVRMYVMCGFMKDARVLFYKNIIEKDMVV, EIVLWNVMIDGYMRLGDCKAARMLFDKMRQR, SVVSWNTMISGYSLNGFFKDAVEVFREMKKGDIRP, NYVTLVSVLPAISRLGSLELGEWLHLYAEDSGIRI, DDVLGSALIDMYSKCGIIEKAIHVFERLPRE, NVITWSAMINGFAIHGQAGDAIDCFCKMRQAGVRP, SDVAYINLLTACSHGGLVEEGRRYFSQMVSVDGLEP, and RIEHYGCMVDLLGRSGLLDEAEEFILNMPIK. The tract at residues 445-520 is type E motif; sequence IWKALLGACR…DPGCSLIDID (76 aa). Residues 521 to 551 form a type E(+) motif region; the sequence is GVLHEFVVEDDSHPKAKEINSMLVEISDKLR. The segment at 552 to 646 is type DYW motif; that stretch reads LAGYRPITTQ…DGSCSCMDYW (95 aa).

This sequence belongs to the PPR family. PCMP-H subfamily.

The protein is Pentatricopeptide repeat-containing protein At5g48910 (PCMP-H38) of Arabidopsis thaliana (Mouse-ear cress).